A 1155-amino-acid chain; its full sequence is DNA-directed RNA polymerase subunit beta (1155 aa).

The protein belongs to the RNA polymerase beta chain family. In terms of assembly, the RNAP catalytic core consists of 2 alpha, 1 beta, 1 beta' and 1 omega subunit. When a sigma factor is associated with the core the holoenzyme is formed, which can initiate transcription.

It carries out the reaction RNA(n) + a ribonucleoside 5'-triphosphate = RNA(n+1) + diphosphate. Its function is as follows. DNA-dependent RNA polymerase catalyzes the transcription of DNA into RNA using the four ribonucleoside triphosphates as substrates. In Borreliella afzelii (strain PKo) (Borrelia afzelii), this protein is DNA-directed RNA polymerase subunit beta.